A 618-amino-acid chain; its full sequence is Probable Xaa-Pro aminopeptidase P (618 aa).

Mn(2+)-binding residues include D414, D425, E523, and E537.

This sequence belongs to the peptidase M24B family. The cofactor is Mn(2+).

The catalysed reaction is Release of any N-terminal amino acid, including proline, that is linked to proline, even from a dipeptide or tripeptide.. Catalyzes the removal of a penultimate prolyl residue from the N-termini of peptides. This Metarhizium robertsii (strain ARSEF 23 / ATCC MYA-3075) (Metarhizium anisopliae (strain ARSEF 23)) protein is Probable Xaa-Pro aminopeptidase P (AMPP).